The following is a 690-amino-acid chain: Protein arginine N-methyltransferase 7 (690 aa).

2 SAM-dependent MTase PRMT-type domains span residues 14-357 (QNSW…YSLW) and 366-690 (TKSV…QKKL).

This sequence belongs to the class I-like SAM-binding methyltransferase superfamily. Protein arginine N-methyltransferase family. PRMT7 subfamily.

Functionally, essential arginine methyltransferase that can both catalyze the formation of omega-N monomethylarginine (MMA) and symmetrical dimethylarginine (sDMA). Specifically mediates the symmetrical dimethylation of arginine residues in the small nuclear ribonucleoproteins SmD1 and SmD3. The sequence is that of Protein arginine N-methyltransferase 7 (Art7) from Drosophila erecta (Fruit fly).